Here is a 267-residue protein sequence, read N- to C-terminus: Undecaprenyl-diphosphatase (267 aa).

8 helical membrane-spanning segments follow: residues 5–25, 45–65, 82–102, 108–128, 143–163, 183–203, 213–233, and 243–263; these read TIVA…PVSS, FEVL…AGRL, ILAV…AHRI, FETP…LLFV, FPLP…IPGV, AAEF…VYDL, AATG…VVVV, and YGYG…LLAL.

This sequence belongs to the UppP family.

The protein localises to the cell inner membrane. It catalyses the reaction di-trans,octa-cis-undecaprenyl diphosphate + H2O = di-trans,octa-cis-undecaprenyl phosphate + phosphate + H(+). Catalyzes the dephosphorylation of undecaprenyl diphosphate (UPP). Confers resistance to bacitracin. The sequence is that of Undecaprenyl-diphosphatase from Paracoccus denitrificans (strain Pd 1222).